A 206-amino-acid polypeptide reads, in one-letter code: Ribosomal RNA small subunit methyltransferase G (206 aa).

Residues G73, L78, 124–125 (VE), and R139 each bind S-adenosyl-L-methionine.

The protein belongs to the methyltransferase superfamily. RNA methyltransferase RsmG family.

The protein localises to the cytoplasm. The enzyme catalyses guanosine(527) in 16S rRNA + S-adenosyl-L-methionine = N(7)-methylguanosine(527) in 16S rRNA + S-adenosyl-L-homocysteine. Its function is as follows. Specifically methylates the N7 position of guanine in position 527 of 16S rRNA. The chain is Ribosomal RNA small subunit methyltransferase G from Idiomarina loihiensis (strain ATCC BAA-735 / DSM 15497 / L2-TR).